The primary structure comprises 364 residues: Fructose-bisphosphate aldolase A (364 aa).

Y5 bears the Phosphotyrosine mark. Phosphothreonine is present on T9. Residues S36 and S39 each carry the phosphoserine modification. The residue at position 42 (K42) is an N6-acetyllysine; alternate. Residue K42 forms a Glycyl lysine isopeptide (Lys-Gly) (interchain with G-Cter in SUMO1); alternate linkage. A Glycyl lysine isopeptide (Lys-Gly) (interchain with G-Cter in SUMO2); alternate cross-link involves residue K42. Residue R43 participates in beta-D-fructose 1,6-bisphosphate binding. S46 carries the phosphoserine modification. Residue K99 is modified to N6-(2-hydroxyisobutyryl)lysine. The residue at position 108 (K108) is an N6-acetyllysine. K111 carries the N6-acetyllysine; alternate modification. K111 carries the N6-malonyllysine; alternate modification. S132 is subject to Phosphoserine. N6-(2-hydroxyisobutyryl)lysine is present on K147. E188 functions as the Proton acceptor in the catalytic mechanism. The active-site Schiff-base intermediate with dihydroxyacetone-P is the K230. S272 is subject to Phosphoserine. Beta-D-fructose 1,6-bisphosphate contacts are provided by residues 272–274 (SGG), S301, and R304. N6-malonyllysine is present on K312. At K330 the chain carries N6-acetyllysine.

This sequence belongs to the class I fructose-bisphosphate aldolase family. In terms of assembly, homotetramer. Interacts with SNX9 and WAS. Interacts with FBP2; the interaction blocks FBP2 inhibition by physiological concentrations of AMP and reduces inhibition by Ca(2+).

It localises to the cytoplasm. It is found in the myofibril. The protein localises to the sarcomere. Its subcellular location is the i band. The protein resides in the m line. It catalyses the reaction beta-D-fructose 1,6-bisphosphate = D-glyceraldehyde 3-phosphate + dihydroxyacetone phosphate. Its pathway is carbohydrate degradation; glycolysis; D-glyceraldehyde 3-phosphate and glycerone phosphate from D-glucose: step 4/4. Its function is as follows. Catalyzes the reversible conversion of beta-D-fructose 1,6-bisphosphate (FBP) into two triose phosphate and plays a key role in glycolysis and gluconeogenesis. In addition, may also function as scaffolding protein. The chain is Fructose-bisphosphate aldolase A (ALDOA) from Pongo abelii (Sumatran orangutan).